Reading from the N-terminus, the 144-residue chain is Large ribosomal subunit protein uL16 (144 aa).

The protein belongs to the universal ribosomal protein uL16 family. As to quaternary structure, part of the 50S ribosomal subunit.

In terms of biological role, binds 23S rRNA and is also seen to make contacts with the A and possibly P site tRNAs. This Novosphingobium aromaticivorans (strain ATCC 700278 / DSM 12444 / CCUG 56034 / CIP 105152 / NBRC 16084 / F199) protein is Large ribosomal subunit protein uL16.